We begin with the raw amino-acid sequence, 687 residues long: Protein SDA1 homolog (687 aa).

Phosphoserine occurs at positions 232, 234, and 236. Residues 254–315 adopt a coiled-coil conformation; that stretch reads KKGSKNKKKL…SCKERFEVKM (62 aa). A disordered region spans residues 484-509; the sequence is LEKGENTEDDEDGWESASLSEEEEED. The span at 490-509 shows a compositional bias: acidic residues; it reads TEDDEDGWESASLSEEEEED. Threonine 552 carries the phosphothreonine modification. Phosphoserine occurs at positions 585, 589, and 595. The disordered stretch occupies residues 604-651; that stretch reads KKPKSDKETRLATAMAGRTDRKEFVRKKTKINPFSSSTNKEKKKQKNF.

It belongs to the SDA1 family.

It is found in the nucleus. It localises to the nucleolus. Required for 60S pre-ribosomal subunits export to the cytoplasm. The chain is Protein SDA1 homolog (Sdad1) from Mus musculus (Mouse).